Consider the following 104-residue polypeptide: Large ribosomal subunit protein uL24 (104 aa).

Belongs to the universal ribosomal protein uL24 family. Part of the 50S ribosomal subunit.

Its function is as follows. One of two assembly initiator proteins, it binds directly to the 5'-end of the 23S rRNA, where it nucleates assembly of the 50S subunit. In terms of biological role, one of the proteins that surrounds the polypeptide exit tunnel on the outside of the subunit. The polypeptide is Large ribosomal subunit protein uL24 (Shewanella oneidensis (strain ATCC 700550 / JCM 31522 / CIP 106686 / LMG 19005 / NCIMB 14063 / MR-1)).